Consider the following 570-residue polypeptide: Proline--tRNA ligase (570 aa).

The protein belongs to the class-II aminoacyl-tRNA synthetase family. ProS type 1 subfamily. As to quaternary structure, homodimer.

Its subcellular location is the cytoplasm. It catalyses the reaction tRNA(Pro) + L-proline + ATP = L-prolyl-tRNA(Pro) + AMP + diphosphate. Its function is as follows. Catalyzes the attachment of proline to tRNA(Pro) in a two-step reaction: proline is first activated by ATP to form Pro-AMP and then transferred to the acceptor end of tRNA(Pro). As ProRS can inadvertently accommodate and process non-cognate amino acids such as alanine and cysteine, to avoid such errors it has two additional distinct editing activities against alanine. One activity is designated as 'pretransfer' editing and involves the tRNA(Pro)-independent hydrolysis of activated Ala-AMP. The other activity is designated 'posttransfer' editing and involves deacylation of mischarged Ala-tRNA(Pro). The misacylated Cys-tRNA(Pro) is not edited by ProRS. This chain is Proline--tRNA ligase, found in Clostridium perfringens (strain SM101 / Type A).